The chain runs to 291 residues: GTPase Era (291 aa).

In terms of domain architecture, Era-type G spans 2-167 (KSGFVSIIGR…LDEIVKYLDE (166 aa)). The G1 stretch occupies residues 10 to 17 (GRTNAGKS). GTP is bound at residue 10-17 (GRTNAGKS). Positions 36–40 (NATRR) are G2. The interval 57 to 60 (DTPG) is G3. GTP is bound by residues 57-61 (DTPGL) and 116-119 (NKVD). Positions 116-119 (NKVD) are G4. The interval 146 to 148 (YSS) is G5. A KH type-2 domain is found at 186–274 (YRDFILESIY…LLKLFVTVKK (89 aa)).

Belongs to the TRAFAC class TrmE-Era-EngA-EngB-Septin-like GTPase superfamily. Era GTPase family. As to quaternary structure, monomer.

Its subcellular location is the cytoplasm. The protein localises to the cell inner membrane. An essential GTPase that binds both GDP and GTP, with rapid nucleotide exchange. Plays a role in 16S rRNA processing and 30S ribosomal subunit biogenesis and possibly also in cell cycle regulation and energy metabolism. The protein is GTPase Era of Campylobacter jejuni subsp. jejuni serotype O:23/36 (strain 81-176).